A 248-amino-acid polypeptide reads, in one-letter code: Triosephosphate isomerase (248 aa).

Position 9 to 11 (9 to 11 (NWK)) interacts with substrate. Catalysis depends on H94, which acts as the Electrophile. The active-site Proton acceptor is E166. Substrate contacts are provided by residues G172, S212, and 233–234 (GG).

It belongs to the triosephosphate isomerase family. In terms of assembly, homodimer.

It is found in the cytoplasm. The enzyme catalyses D-glyceraldehyde 3-phosphate = dihydroxyacetone phosphate. It functions in the pathway carbohydrate biosynthesis; gluconeogenesis. It participates in carbohydrate degradation; glycolysis; D-glyceraldehyde 3-phosphate from glycerone phosphate: step 1/1. In terms of biological role, involved in the gluconeogenesis. Catalyzes stereospecifically the conversion of dihydroxyacetone phosphate (DHAP) to D-glyceraldehyde-3-phosphate (G3P). The chain is Triosephosphate isomerase from Clostridium perfringens (strain ATCC 13124 / DSM 756 / JCM 1290 / NCIMB 6125 / NCTC 8237 / Type A).